A 330-amino-acid chain; its full sequence is Nodulation protein D 2 (330 aa).

Residues 6–63 (LDLNLLVALDALITERNLSSAARKINLSQPAMSAAVARLRKHFRDELFGMRGRELVLS) form the HTH lysR-type domain. A DNA-binding region (H-T-H motif) is located at residues 23 to 42 (LSSAARKINLSQPAMSAAVA). Positions 308–330 (RVTSSPEDAEPPGHFVRSVSPLP) are disordered.

It belongs to the LysR transcriptional regulatory family.

In terms of biological role, nodD regulates the expression of the nodABCFE genes which encode other nodulation proteins. NodD is also a negative regulator of its own expression. Binds flavonoids as inducers. This Bradyrhizobium diazoefficiens (strain JCM 10833 / BCRC 13528 / IAM 13628 / NBRC 14792 / USDA 110) protein is Nodulation protein D 2 (nodD2).